Here is a 322-residue protein sequence, read N- to C-terminus: MVTVFDAVSDRAQRVRHPEKAHRPDTEVLRKPDWIRVKAPTSKGYQETRSIVKSHKLVTVCEEAGCPNIGECWDKKHATFMIMGEICTRACAFCNVATGKPNALDLDEPANVAKAVKQMGLSHVVITSVDRDDLDDGGAEHFEKVIFAIREASPETTIEILTPDFLRKPGALERVVAAKPDVINHNLETVPSNYLTVRPGARYFHSIRLLQRVKELDPTMFTKSGIMVGLGEERNEVLQLMDDLRTADVDFLTIGQYLQPSRKHHKVEKFVTPEEFKSYETVAYTKGFLMVSSSPLTRSSHHAGDDFARLKAARERKLAAAE.

Positions 61, 66, 72, 87, 91, 94, and 300 each coordinate [4Fe-4S] cluster. In terms of domain architecture, Radical SAM core spans Trp73–Leu289.

Belongs to the radical SAM superfamily. Lipoyl synthase family. [4Fe-4S] cluster serves as cofactor.

The protein localises to the cytoplasm. It carries out the reaction [[Fe-S] cluster scaffold protein carrying a second [4Fe-4S](2+) cluster] + N(6)-octanoyl-L-lysyl-[protein] + 2 oxidized [2Fe-2S]-[ferredoxin] + 2 S-adenosyl-L-methionine + 4 H(+) = [[Fe-S] cluster scaffold protein] + N(6)-[(R)-dihydrolipoyl]-L-lysyl-[protein] + 4 Fe(3+) + 2 hydrogen sulfide + 2 5'-deoxyadenosine + 2 L-methionine + 2 reduced [2Fe-2S]-[ferredoxin]. It functions in the pathway protein modification; protein lipoylation via endogenous pathway; protein N(6)-(lipoyl)lysine from octanoyl-[acyl-carrier-protein]: step 2/2. Its function is as follows. Catalyzes the radical-mediated insertion of two sulfur atoms into the C-6 and C-8 positions of the octanoyl moiety bound to the lipoyl domains of lipoate-dependent enzymes, thereby converting the octanoylated domains into lipoylated derivatives. The sequence is that of Lipoyl synthase from Rhizobium meliloti (strain 1021) (Ensifer meliloti).